We begin with the raw amino-acid sequence, 45 residues long: Photosystem I reaction center subunit IX 1 (45 aa).

The helical transmembrane segment at 9 to 29 (WFRSAPVVATIWITLTAGIIV) threads the bilayer.

This sequence belongs to the PsaJ family.

The protein resides in the cellular thylakoid membrane. May help in the organization of the PsaE and PsaF subunits. In Prochlorococcus marinus (strain NATL1A), this protein is Photosystem I reaction center subunit IX 1.